We begin with the raw amino-acid sequence, 193 residues long: Urease accessory protein UreE (193 aa).

The disordered stretch occupies residues 138-193 (RGAYHSHGAHSHDQGHAAHDHGNEHKHDHGHDHVHGPGCDHDHDHDHGHHHDHKHD). Over residues 147–193 (HSHDQGHAAHDHGNEHKHDHGHDHVHGPGCDHDHDHDHGHHHDHKHD) the composition is skewed to basic and acidic residues.

This sequence belongs to the UreE family.

It is found in the cytoplasm. Functionally, involved in urease metallocenter assembly. Binds nickel. Probably functions as a nickel donor during metallocenter assembly. This chain is Urease accessory protein UreE, found in Rhizobium leguminosarum bv. trifolii (strain WSM2304).